A 226-amino-acid polypeptide reads, in one-letter code: Protein B (226 aa).

The interval 37–100 is igG constant region-binding; the sequence is DNVQGTDYEK…FSTQHLANKV (64 aa). Repeats lie at residues 158-168, 169-179, and 180-190; these read TKSKLDKEIWN, TRFTRDKKVLN, and VKEFKVYNTLN.

It localises to the secreted. Functionally, protein B belongs to the group of bacterial Fc-binding protein. The protein is Protein B of Streptococcus agalactiae.